The chain runs to 1102 residues: WD repeat-containing protein 72 (1102 aa).

WD repeat units follow at residues 15 to 54, 60 to 102, 160 to 197, 318 to 362, 402 to 441, 459 to 504, 507 to 552, and 555 to 594; these read APPHSITAIMITDDQRTIVTGSQEGQLCLWNLSHELKISA, GHSA…CMEK, NCMCIVHSMRIQEDSLLVVSVAGELKVWDLSSSINSIQ, KEQS…VSKF, AGTAVVTSSEYIPSLDKLICGCEDGTIIITQALNAAKARL, GHHQ…ILHK, LEAG…CLLH, and KHLFPVRMIKWHPVENFLIVGCADDSVYIWEIETGTLERH. Residues serine 1081 and serine 1083 each carry the phosphoserine modification.

The protein resides in the cytoplasmic vesicle. In terms of biological role, plays a major role in formation of tooth enamel. Specifically required during the maturation phase of amelogenesis for normal formation of the enamel matrix and clearance of enamel proteins. May be involved in localization of the calcium transporter SLC24A4 to the ameloblast cell membrane. This chain is WD repeat-containing protein 72 (WDR72), found in Homo sapiens (Human).